The following is a 425-amino-acid chain: Glutamyl-tRNA reductase (425 aa).

Substrate-binding positions include 49–52, Ser-106, 111–113, and Gln-117; these read TCNR and EPQ. Cys-50 functions as the Nucleophile in the catalytic mechanism. Position 186 to 191 (186 to 191) interacts with NADP(+); the sequence is GAGETI.

The protein belongs to the glutamyl-tRNA reductase family. Homodimer.

The enzyme catalyses (S)-4-amino-5-oxopentanoate + tRNA(Glu) + NADP(+) = L-glutamyl-tRNA(Glu) + NADPH + H(+). It participates in porphyrin-containing compound metabolism; protoporphyrin-IX biosynthesis; 5-aminolevulinate from L-glutamyl-tRNA(Glu): step 1/2. Its function is as follows. Catalyzes the NADPH-dependent reduction of glutamyl-tRNA(Glu) to glutamate 1-semialdehyde (GSA). The polypeptide is Glutamyl-tRNA reductase (Saccharophagus degradans (strain 2-40 / ATCC 43961 / DSM 17024)).